Consider the following 761-residue polypeptide: Probable ATP-dependent RNA helicase DDX20 (761 aa).

Residues 26–54 (VEFSSLLLSKPVLEGLSASGFQRPSPIQL) carry the Q motif motif. Residues arginine 48, glutamine 53, 70 to 77 (AKSGTGKT), and 73 to 78 (GTGKTC) each bind ATP. The 175-residue stretch at 57–231 (IPLGRCGLDL…SRYMREPTFV (175 aa)) folds into the Helicase ATP-binding domain. Residues 175–178 (DEAD) carry the DEAD box motif. Residues 266-415 (SLLELFSKIP…PIPPGIMEEA (150 aa)) form the Helicase C-terminal domain. Disordered stretches follow at residues 428 to 525 (PKIP…KSHT) and 570 to 720 (HDAH…EAGQ). Basic and acidic residues predominate over residues 443 to 456 (KSEQMKSKPSRESH). Residues 498-512 (QHDSTITQKQQNNTL) are compositionally biased toward polar residues. Low complexity-rich tracts occupy residues 600-613 (SELS…SESS) and 623-635 (ESSS…STLE). Residues 655–679 (TLPSTRVPQQATRSKQKPCQPQSQD) show a composition bias toward polar residues. Basic residues predominate over residues 683–707 (HHNLPHKHRTASKSSRRPTGPKRRT).

It belongs to the DEAD box helicase family. DDX20 subfamily. As to quaternary structure, part of the core SMN complex.

The protein localises to the cytoplasm. It localises to the nucleus. It catalyses the reaction ATP + H2O = ADP + phosphate + H(+). The enzyme catalyses a ribonucleoside 5'-triphosphate + H2O = a ribonucleoside 5'-diphosphate + phosphate + H(+). Its function is as follows. The SMN complex catalyzes the assembly of small nuclear ribonucleoproteins (snRNPs), the building blocks of the spliceosome, and thereby plays an important role in the splicing of cellular pre-mRNAs. Most spliceosomal snRNPs contain a common set of Sm proteins SNRPB, SNRPD1, SNRPD2, SNRPD3, SNRPE, SNRPF and SNRPG that assemble in a heptameric protein ring on the Sm site of the small nuclear RNA to form the core snRNP (Sm core). In the cytosol, the Sm proteins SNRPD1, SNRPD2, SNRPE, SNRPF and SNRPG are trapped in an inactive 6S pICln-Sm complex by the chaperone CLNS1A that controls the assembly of the core snRNP. To assemble core snRNPs, the SMN complex accepts the trapped 5Sm proteins from CLNS1A forming an intermediate. Binding of snRNA inside 5Sm triggers eviction of the SMN complex, thereby allowing binding of SNRPD3 and SNRPB to complete assembly of the core snRNP. May also play a role in the metabolism of small nucleolar ribonucleoprotein (snoRNPs). This Danio rerio (Zebrafish) protein is Probable ATP-dependent RNA helicase DDX20 (ddx20).